The sequence spans 367 residues: MKEPLDLSKYSVRTDLAVEAHQMLQERQEEQQGIQGVVVKEREEEGITITKVTIDEVASESMGKKPGNYLTLEVQGIRQQDTELQQKVERIFAKEFSYFLEEVGVTKEASCLIVGLGNWNVTPDALGPIVVENVLVTRHLFQLQPESVEEGFRPVSAIRPGVMGITGIETSDVIYGIIEKTKPDFVIAIDALAARSIERVNSTIQISDTGIHPGSGVGNKRKELSKETLGIPVIAIGVPTVVDAVSITSDTIDFILKHFGREMKEGNKPSRSLLPAGFTFGEKKKLTEEDMPDEKSRNMFLGAVGTLEDEEKRKLIYEVLSPLGHNLMVTPKEVDAFIEDMANVIASGLNAALHHQIDQDNTGAYTH.

The propeptide occupies 1-15 (MKEPLDLSKYSVRTD).

It belongs to the peptidase A25 family. Homotetramer. Post-translationally, autoproteolytically processed. The inactive tetrameric zymogen termed p46 autoprocesses to a smaller form termed p41, which is active only during spore germination.

It catalyses the reaction Endopeptidase action with P4 Glu or Asp, P1 preferably Glu &gt; Asp, P1' hydrophobic and P2' Ala.. In terms of biological role, initiates the rapid degradation of small, acid-soluble proteins during spore germination. The polypeptide is Germination protease (Bacillus cereus (strain AH187)).